The chain runs to 212 residues: HTH-type transcriptional regulator RutR (212 aa).

The HTH tetR-type domain maps to 17–77 (SAKKKAILSA…AVLRQILDIW (61 aa)). The segment at residues 39 to 58 (TRLEQIAELAGVSKTNLLYY) is a DNA-binding region (H-T-H motif).

In terms of assembly, homodimer.

Its function is as follows. Master transcription regulator which represses the degradation of pyrimidines (rutABCDEFG) and purines (gcl operon) for maintenance of metabolic balance between pyrimidines and purines. It also regulates the synthesis of pyrimidine nucleotides and arginine from glutamine (carAB) and the supply of glutamate (gadABWX). The chain is HTH-type transcriptional regulator RutR (rutR) from Escherichia coli O6:H1 (strain CFT073 / ATCC 700928 / UPEC).